Reading from the N-terminus, the 196-residue chain is Probable GTP-binding protein EngB (196 aa).

Residues 21-195 (DVSEICLIGR…YELINKLLGS (175 aa)) form the EngB-type G domain. GTP is bound by residues 29-36 (GRSNVGKS), 56-60 (GKTRL), 75-78 (DAPG), 142-145 (TKLD), and 174-176 (ISN). Mg(2+)-binding residues include Ser36 and Thr58.

This sequence belongs to the TRAFAC class TrmE-Era-EngA-EngB-Septin-like GTPase superfamily. EngB GTPase family. Requires Mg(2+) as cofactor.

In terms of biological role, necessary for normal cell division and for the maintenance of normal septation. The polypeptide is Probable GTP-binding protein EngB (Mycoplasma capricolum subsp. capricolum (strain California kid / ATCC 27343 / NCTC 10154)).